A 276-amino-acid chain; its full sequence is NADPH-dependent 7-cyano-7-deazaguanine reductase (276 aa).

Position 83 to 85 (83 to 85 (IES)) interacts with substrate. Residue 85–86 (SK) coordinates NADPH. Cys184 acts as the Thioimide intermediate in catalysis. Catalysis depends on Asp191, which acts as the Proton donor. 223-224 (HE) is a binding site for substrate. 252–253 (RG) is an NADPH binding site.

Belongs to the GTP cyclohydrolase I family. QueF type 2 subfamily. As to quaternary structure, homodimer.

Its subcellular location is the cytoplasm. It carries out the reaction 7-aminomethyl-7-carbaguanine + 2 NADP(+) = 7-cyano-7-deazaguanine + 2 NADPH + 3 H(+). The protein operates within tRNA modification; tRNA-queuosine biosynthesis. In terms of biological role, catalyzes the NADPH-dependent reduction of 7-cyano-7-deazaguanine (preQ0) to 7-aminomethyl-7-deazaguanine (preQ1). The chain is NADPH-dependent 7-cyano-7-deazaguanine reductase from Pseudomonas fluorescens (strain Pf0-1).